The primary structure comprises 513 residues: Sphingolipid C9-methyltransferase (513 aa).

The next 2 helical transmembrane spans lie at 52-72 (ILFSILALVPGYITYKLGLGF) and 74-94 (TWVFFFLILAIPILMAYWSIM). Residues 222–223 (YT), 259–267 (VLDIGCGWG), 285–290 (TLGRNQ), and 315–316 (YR) contribute to the S-adenosyl-L-methionine site.

It belongs to the CFA/CMAS family.

The protein resides in the membrane. The enzyme catalyses a (4E,8E)-4-sphinga-4,8-dienine ceramide + S-adenosyl-L-methionine = a 9-methyl-(4E,8E)-sphinga-4,8-dienine ceramide + S-adenosyl-L-homocysteine + H(+). The protein operates within lipid metabolism; sphingolipid metabolism. Functionally, catalyzes methylation of the sphingoid base component of glucosylceramides (GluCers) at the C9-position. Sphingolipid C9-methylation requires 4,8-desaturated ceramides as substrates. Glucosylceramides play important roles in growth, differentiation and pathogenicity. The methyl group at the C9-position distinguishes fungal glucosylceramides from those of plants and animals, and may thus play a role in host-pathogen interactions enabling the host to recognize the fungal attack and initiate specific defense responses. Not necessary for vegetative growth at low temperatures, but plays a role in hyphal formation on solid medium. The sequence is that of Sphingolipid C9-methyltransferase from Candida albicans (strain SC5314 / ATCC MYA-2876) (Yeast).